Reading from the N-terminus, the 511-residue chain is Maturase K (511 aa).

It belongs to the intron maturase 2 family. MatK subfamily.

Its subcellular location is the plastid. The protein resides in the chloroplast. Usually encoded in the trnK tRNA gene intron. Probably assists in splicing its own and other chloroplast group II introns. In Bromelia plumieri (Karatas), this protein is Maturase K.